The primary structure comprises 188 residues: Elongation factor P (188 aa).

The protein belongs to the elongation factor P family.

The protein resides in the cytoplasm. The protein operates within protein biosynthesis; polypeptide chain elongation. In terms of biological role, involved in peptide bond synthesis. Stimulates efficient translation and peptide-bond synthesis on native or reconstituted 70S ribosomes in vitro. Probably functions indirectly by altering the affinity of the ribosome for aminoacyl-tRNA, thus increasing their reactivity as acceptors for peptidyl transferase. In Aeromonas salmonicida (strain A449), this protein is Elongation factor P.